A 389-amino-acid polypeptide reads, in one-letter code: Transmembrane protease serine 11A (389 aa).

The Cytoplasmic portion of the chain corresponds to 1-23 (MEVAGYGTHNRDLKQWMVTLLSA). The chain crosses the membrane as a helical; Signal-anchor for type II membrane protein span at residues 24–44 (LSLMMVVVTIGLLALFLVFDI). The SEA domain maps to 31–148 (VTIGLLALFL…SLVQVKDCGK (118 aa)). The Extracellular segment spans residues 45–389 (QVNSNSGQKS…RHWIASKTGL (345 aa)). A Peptidase S1 domain is found at 158–388 (IVSGNPAAKG…YRHWIASKTG (231 aa)). C183 and C199 are oxidised to a cystine. Catalysis depends on charge relay system residues H198 and D243. N274 carries an N-linked (GlcNAc...) asparagine glycan. Cystine bridges form between C308–C324 and C335–C364. S339 (charge relay system) is an active-site residue.

The protein belongs to the peptidase S1 family.

It is found in the membrane. Functionally, probable serine protease which may play a role in cellular senescence. Overexpression inhibits cell growth and induce G1 cell cycle arrest. The sequence is that of Transmembrane protease serine 11A (Tmprss11a) from Mus musculus (Mouse).